A 391-amino-acid polypeptide reads, in one-letter code: Probable acridone synthase 3 (391 aa).

Cysteine 164 is a catalytic residue.

This sequence belongs to the thiolase-like superfamily. Chalcone/stilbene synthases family.

The catalysed reaction is N-methylanthraniloyl-CoA + 3 malonyl-CoA + 3 H(+) = 1,3-dihydroxy-N-methylacridone + 3 CO2 + 4 CoA + H2O. The sequence is that of Probable acridone synthase 3 (ACS3) from Ruta graveolens (Common rue).